A 730-amino-acid polypeptide reads, in one-letter code: Ribosomal RNA large subunit methyltransferase K/L (730 aa).

Positions 46 to 157 (TAYRLCVWSR…RGEAILSLDL (112 aa)) constitute a THUMP domain. Residues 395–418 (ERREAQPEGTEVRQQAPQASEPAR) are disordered.

The protein belongs to the methyltransferase superfamily. RlmKL family.

The protein resides in the cytoplasm. The enzyme catalyses guanosine(2445) in 23S rRNA + S-adenosyl-L-methionine = N(2)-methylguanosine(2445) in 23S rRNA + S-adenosyl-L-homocysteine + H(+). It carries out the reaction guanosine(2069) in 23S rRNA + S-adenosyl-L-methionine = N(2)-methylguanosine(2069) in 23S rRNA + S-adenosyl-L-homocysteine + H(+). Functionally, specifically methylates the guanine in position 2445 (m2G2445) and the guanine in position 2069 (m7G2069) of 23S rRNA. The polypeptide is Ribosomal RNA large subunit methyltransferase K/L (Pseudomonas putida (strain GB-1)).